We begin with the raw amino-acid sequence, 123 residues long: UPF0342 protein LAR_1202 (123 aa).

It belongs to the UPF0342 family.

This is UPF0342 protein LAR_1202 from Limosilactobacillus reuteri subsp. reuteri (strain JCM 1112) (Lactobacillus reuteri).